Here is a 428-residue protein sequence, read N- to C-terminus: 3-deoxy-D-manno-octulosonic acid transferase (428 aa).

Glu-64 serves as the catalytic Proton acceptor. CMP is bound by residues 274-275, 316-318, and 342-345; these read PR, LGE, and NLIE.

This sequence belongs to the glycosyltransferase group 1 family. Glycosyltransferase 30 subfamily.

The protein resides in the cell inner membrane. It catalyses the reaction lipid IVA (E. coli) + CMP-3-deoxy-beta-D-manno-octulosonate = alpha-Kdo-(2-&gt;6)-lipid IVA (E. coli) + CMP + H(+). It participates in bacterial outer membrane biogenesis; LPS core biosynthesis. Its function is as follows. Involved in lipopolysaccharide (LPS) biosynthesis. Catalyzes the transfer of a single 3-deoxy-D-manno-octulosonate (Kdo) residue from CMP-Kdo to lipid IV(A), the tetraacyldisaccharide-1,4'-bisphosphate precursor of lipid A. In Bordetella pertussis, this protein is 3-deoxy-D-manno-octulosonic acid transferase (waaA).